A 138-amino-acid chain; its full sequence is Probable glycine cleavage system H protein 1 (138 aa).

The region spanning 30-112 (IATVGITDYA…YGRGWIFKLK (83 aa)) is the Lipoyl-binding domain. K71 carries the N6-lipoyllysine modification.

This sequence belongs to the GcvH family. As to quaternary structure, the glycine cleavage system is composed of four proteins: P, T, L and H. It depends on (R)-lipoate as a cofactor.

The glycine cleavage system catalyzes the degradation of glycine. The H protein shuttles the methylamine group of glycine from the P protein to the T protein. In Sulfolobus acidocaldarius (strain ATCC 33909 / DSM 639 / JCM 8929 / NBRC 15157 / NCIMB 11770), this protein is Probable glycine cleavage system H protein 1.